Reading from the N-terminus, the 147-residue chain is Augurin (147 aa).

Residues 1–31 (MANSSARPAFLVMTALALLLLLCVGPGGISG) form the signal peptide. Propeptides lie at residues 32–68 (NKLKLLLRKREAPAPTMTPVAVQESRAKEFLSSLRRP) and 132–147 (SAHSFRHGASVNYDDY).

The protein belongs to the augurin family.

It localises to the secreted. The protein localises to the cytoplasm. The protein resides in the apical cell membrane. Functionally, probable hormone that may attenuate cell proliferation and induce senescence of oligodendrocyte and neural precursor cells in the central nervous system. ECRG4-induced senescence is characterized by G1 arrest, RB1 dephosphorylation and accelerated CCND1 and CCND3 proteasomal degradation. The protein is Augurin of Bos taurus (Bovine).